We begin with the raw amino-acid sequence, 734 residues long: Photosystem I P700 chlorophyll a apoprotein A2 (734 aa).

8 helical membrane passes run 46–69 (IFASHFGQLAIIFLWTSGNLFHVA), 135–158 (LYGGSIFLLFVSALFLIAGWLHLQ), 175–199 (LNHHLSGLFGVSSLAWTGHLVHVAI), 273–291 (MAHHHLAIAVIFIIAGHMY), 330–353 (LHFQLGLALASLGVITSLVAQHMY), 369–395 (AALYTHHQYIAGFIMTGAFAHGAIFFI), 417–439 (AIISHLSWASLFLGFHTLGLYVH), and 517–535 (FLVHHAIALGLHTTTLILV). Cysteine 559 and cysteine 568 together coordinate [4Fe-4S] cluster. Transmembrane regions (helical) follow at residues 575–596 (AFYLAVFWMLNTIGWVTFYWHW) and 643–665 (LSVWAWMFLFGHLVWATGFMFLI). Residues histidine 654, methionine 662, and tyrosine 670 each contribute to the chlorophyll a site. Tryptophan 671 serves as a coordination point for phylloquinone. A helical transmembrane segment spans residues 707-727 (LVGLAHFSVGYIFTYAAFLIA).

The protein belongs to the PsaA/PsaB family. The PsaA/B heterodimer binds the P700 chlorophyll special pair and subsequent electron acceptors. PSI consists of a core antenna complex that captures photons, and an electron transfer chain that converts photonic excitation into a charge separation. The eukaryotic PSI reaction center is composed of at least 11 subunits. Requires P700 is a chlorophyll a/chlorophyll a' dimer, A0 is one or more chlorophyll a, A1 is one or both phylloquinones and FX is a shared 4Fe-4S iron-sulfur center. as cofactor.

The protein localises to the plastid. It is found in the chloroplast thylakoid membrane. The enzyme catalyses reduced [plastocyanin] + hnu + oxidized [2Fe-2S]-[ferredoxin] = oxidized [plastocyanin] + reduced [2Fe-2S]-[ferredoxin]. Functionally, psaA and PsaB bind P700, the primary electron donor of photosystem I (PSI), as well as the electron acceptors A0, A1 and FX. PSI is a plastocyanin-ferredoxin oxidoreductase, converting photonic excitation into a charge separation, which transfers an electron from the donor P700 chlorophyll pair to the spectroscopically characterized acceptors A0, A1, FX, FA and FB in turn. Oxidized P700 is reduced on the lumenal side of the thylakoid membrane by plastocyanin. This Physcomitrium patens (Spreading-leaved earth moss) protein is Photosystem I P700 chlorophyll a apoprotein A2.